Consider the following 125-residue polypeptide: Large ribosomal subunit protein bL12 (125 aa).

It belongs to the bacterial ribosomal protein bL12 family. In terms of assembly, homodimer. Part of the ribosomal stalk of the 50S ribosomal subunit. Forms a multimeric L10(L12)X complex, where L10 forms an elongated spine to which 2 to 4 L12 dimers bind in a sequential fashion. Binds GTP-bound translation factors.

Forms part of the ribosomal stalk which helps the ribosome interact with GTP-bound translation factors. Is thus essential for accurate translation. In Rhizobium leguminosarum bv. trifolii (strain WSM2304), this protein is Large ribosomal subunit protein bL12.